Reading from the N-terminus, the 527-residue chain is Cytokinin dehydrogenase 6 (527 aa).

The signal sequence occupies residues 1-22 (MAARCSIAFMVMASCLSVVVSG). The region spanning 55–236 (VAAAPEAVLH…TRARIGLEPA (182 aa)) is the FAD-binding PCMH-type domain. Glycine 91 and glycine 93 together coordinate FAD. Histidine 94 is modified (pros-8alpha-FAD histidine). FAD contacts are provided by serine 95 and glutamine 99. The N-linked (GlcNAc...) asparagine glycan is linked to asparagine 121. FAD is bound by residues aspartate 160, threonine 165, serine 171, isoleucine 175, and isoleucine 226. N-linked (GlcNAc...) asparagine glycosylation is found at asparagine 280 and asparagine 323. FAD contacts are provided by tyrosine 475, serine 510, and glutamine 513.

Belongs to the oxygen-dependent FAD-linked oxidoreductase family. In terms of assembly, monomer. FAD serves as cofactor.

Its subcellular location is the secreted. It is found in the extracellular space. It carries out the reaction N(6)-dimethylallyladenine + A + H2O = 3-methyl-2-butenal + adenine + AH2. Catalyzes the oxidation of cytokinins, a family of N(6)-substituted adenine derivatives that are plant hormones, where the substituent is an isopentenyl group. The chain is Cytokinin dehydrogenase 6 (CKX6) from Oryza sativa subsp. japonica (Rice).